We begin with the raw amino-acid sequence, 422 residues long: G-protein coupled receptor 151 protein (422 aa).

Topologically, residues 1 to 45 are extracellular; that stretch reads MGKAMLRAGFADTNSSNMNESFARLHFAGGYLPSDSKDWRTIIPS. 2 N-linked (GlcNAc...) asparagine glycosylation sites follow: Asn14 and Asn19. Residues 46–66 form a helical membrane-spanning segment; it reads LLMAVCLVGLVGNLCVIGILL. At 67 to 76 the chain is on the cytoplasmic side; that stretch reads HGVWKRKPST. A helical transmembrane segment spans residues 77–97; the sequence is IHSLILNLSLADFSLLLFSAP. The Extracellular segment spans residues 98 to 123; that stretch reads VRAAAYSKGVWDLGWFICKSSDWFTH. Cys115 and Cys191 are disulfide-bonded. A helical transmembrane segment spans residues 124–144; that stretch reads VCMAAKSLTFVVVAKACFAYA. Residues 145–157 are Cytoplasmic-facing; it reads SDPAKQESIHSRT. A helical transmembrane segment spans residues 158–178; sequence IWSVLAGIWVVASLLPLPEWL. At 179–205 the chain is on the extracellular side; it reads FSTTRRHAGVEMCLVDVPAVAEEFMSM. The chain crosses the membrane as a helical span at residues 206–226; that stretch reads FGKLYPLLVFCLPLLLAGVYF. At 227–259 the chain is on the cytoplasmic side; sequence WRAYDQCKTRCTKTRNLRDQMRSKQLTVMLLST. Residues 260 to 280 form a helical membrane-spanning segment; the sequence is AIISALLWLPEWIAWLWVWHV. The Extracellular portion of the chain corresponds to 281–290; sequence KAGGPMPPQG. A helical membrane pass occupies residues 291–311; it reads FIALSQVLMFFTSTANPLIFL. The Cytoplasmic portion of the chain corresponds to 312–422; it reads VMSEEFKAGL…HEGQETEGCN (111 aa). The tract at residues 339–422 is disordered; sequence VQEAPAGNTE…HEGQETEGCN (84 aa). Residues 366–380 show a composition bias toward basic and acidic residues; the sequence is TDGRGSPDDSKEKSG.

High expression in the brain and lower levels in kidney and liver. In the nervous system expressed specifically in the habenular area (at protein level).

The protein localises to the cell membrane. In terms of biological role, proton-sensing G-protein coupled receptor. The chain is G-protein coupled receptor 151 protein (Gpr151) from Mus musculus (Mouse).